Reading from the N-terminus, the 407-residue chain is S-adenosylmethionine synthase (407 aa).

Histidine 19 contacts ATP. Aspartate 21 is a Mg(2+) binding site. Glutamate 47 contributes to the K(+) binding site. L-methionine contacts are provided by glutamate 60 and glutamine 103. A flexible loop region spans residues 103–113 (QSQEIADGVDT). Residues 108–131 (ADGVDTSQEARGDGHFEEDDRAGA) form a disordered region. Residues 178–180 (DGK), aspartate 258, 264–265 (RK), alanine 281, and lysine 285 each bind ATP. Residue aspartate 258 participates in L-methionine binding. Lysine 289 lines the L-methionine pocket.

This sequence belongs to the AdoMet synthase family. In terms of assembly, homotetramer; dimer of dimers. It depends on Mg(2+) as a cofactor. K(+) is required as a cofactor.

Its subcellular location is the cytoplasm. The catalysed reaction is L-methionine + ATP + H2O = S-adenosyl-L-methionine + phosphate + diphosphate. It functions in the pathway amino-acid biosynthesis; S-adenosyl-L-methionine biosynthesis; S-adenosyl-L-methionine from L-methionine: step 1/1. Catalyzes the formation of S-adenosylmethionine (AdoMet) from methionine and ATP. The overall synthetic reaction is composed of two sequential steps, AdoMet formation and the subsequent tripolyphosphate hydrolysis which occurs prior to release of AdoMet from the enzyme. The sequence is that of S-adenosylmethionine synthase from Corynebacterium efficiens (strain DSM 44549 / YS-314 / AJ 12310 / JCM 11189 / NBRC 100395).